The sequence spans 465 residues: ATP-sulfurylase 3, chloroplastic (465 aa).

A chloroplast-targeting transit peptide spans 1–49; the sequence is MASMSTVFPKPTSFISQPLTKSHKSDSVTTSISFPSNSKTRSLRTISVR.

It belongs to the sulfate adenylyltransferase family. Homotetramer.

The protein resides in the plastid. It is found in the chloroplast stroma. The catalysed reaction is sulfate + ATP + H(+) = adenosine 5'-phosphosulfate + diphosphate. The protein operates within sulfur metabolism; hydrogen sulfide biosynthesis; sulfite from sulfate: step 1/3. This chain is ATP-sulfurylase 3, chloroplastic (APS3), found in Arabidopsis thaliana (Mouse-ear cress).